A 127-amino-acid polypeptide reads, in one-letter code: Ribosome-binding factor A (127 aa).

This sequence belongs to the RbfA family. As to quaternary structure, monomer. Binds 30S ribosomal subunits, but not 50S ribosomal subunits or 70S ribosomes.

The protein localises to the cytoplasm. In terms of biological role, one of several proteins that assist in the late maturation steps of the functional core of the 30S ribosomal subunit. Associates with free 30S ribosomal subunits (but not with 30S subunits that are part of 70S ribosomes or polysomes). Required for efficient processing of 16S rRNA. May interact with the 5'-terminal helix region of 16S rRNA. The polypeptide is Ribosome-binding factor A (Geobacillus kaustophilus (strain HTA426)).